The primary structure comprises 92 residues: Protein RESPONSE TO LOW SULFUR 4 (92 aa).

Residues 8-63 are a coiled coil; that stretch reads VMVAASEVEELRQKNGEMEKAVEEMRKEMLQLWRRTQVAEEAEEHLCSQLAELEAE.

Required for flower development in short-day conditions. The polypeptide is Protein RESPONSE TO LOW SULFUR 4 (Arabidopsis thaliana (Mouse-ear cress)).